The sequence spans 327 residues: Geranylgeranyl transferase type-2 subunit alpha (327 aa).

5 PFTA repeats span residues 44–78, 84–118, 123–157, 163–197, and 207–241; these read YSIEALKKTSELLEKNPEFNAIWNYRRDIIASLAS, FWDKELVFVMMLLKDYPKVYWIWNHRLWVLKHYPT, VWQTELAVVNKLLEQDARNYHGWHYRRIVVGNIES, LDKEEFEYTTIKINNNISNYSAWHQRVQIISRMFQ, and YIRTEISYIINAMFTDAEDQSVWFYIKWFIKNDIV.

Belongs to the protein prenyltransferase subunit alpha family. As to quaternary structure, heterodimer of an alpha and a beta subunit.

It carries out the reaction geranylgeranyl diphosphate + L-cysteinyl-[protein] = S-geranylgeranyl-L-cysteinyl-[protein] + diphosphate. Catalyzes the transfer of a geranyl-geranyl moiety from geranyl-geranyl pyrophosphate to proteins having the C-terminal -XCC or -XCXC, where both cysteines may become modified. Acts on YPT1 and SEC4. This Saccharomyces cerevisiae (strain ATCC 204508 / S288c) (Baker's yeast) protein is Geranylgeranyl transferase type-2 subunit alpha (BET4).